Reading from the N-terminus, the 61-residue chain is Large ribosomal subunit protein bL32 (61 aa).

Positions 1 to 44 (MAVQQNRKSRSRRDMRRSHDALTENALTVDQATGETHRRHHVTK) are disordered. Over residues 7–16 (RKSRSRRDMR) the composition is skewed to basic residues. Residues 25–34 (NALTVDQATG) are compositionally biased toward polar residues.

Belongs to the bacterial ribosomal protein bL32 family.

The polypeptide is Large ribosomal subunit protein bL32 (Acinetobacter baumannii (strain AB307-0294)).